Here is a 205-residue protein sequence, read N- to C-terminus: Glycerol-3-phosphate acyltransferase (205 aa).

5 consecutive transmembrane segments (helical) span residues 13 to 33 (LLAL…GLIL), 68 to 88 (LLLD…LWGY), 90 to 110 (ASLV…WLGF), 120 to 140 (IGVL…IWLA), and 147 to 167 (YSSL…WVLG).

This sequence belongs to the PlsY family. In terms of assembly, probably interacts with PlsX.

It is found in the cell inner membrane. It carries out the reaction an acyl phosphate + sn-glycerol 3-phosphate = a 1-acyl-sn-glycero-3-phosphate + phosphate. Its pathway is lipid metabolism; phospholipid metabolism. Catalyzes the transfer of an acyl group from acyl-phosphate (acyl-PO(4)) to glycerol-3-phosphate (G3P) to form lysophosphatidic acid (LPA). This enzyme utilizes acyl-phosphate as fatty acyl donor, but not acyl-CoA or acyl-ACP. The sequence is that of Glycerol-3-phosphate acyltransferase from Agrobacterium fabrum (strain C58 / ATCC 33970) (Agrobacterium tumefaciens (strain C58)).